We begin with the raw amino-acid sequence, 214 residues long: NADH-quinone oxidoreductase subunit C (214 aa).

The protein belongs to the complex I 30 kDa subunit family. As to quaternary structure, NDH-1 is composed of 14 different subunits. Subunits NuoB, C, D, E, F, and G constitute the peripheral sector of the complex.

It localises to the cell inner membrane. The catalysed reaction is a quinone + NADH + 5 H(+)(in) = a quinol + NAD(+) + 4 H(+)(out). Its function is as follows. NDH-1 shuttles electrons from NADH, via FMN and iron-sulfur (Fe-S) centers, to quinones in the respiratory chain. The immediate electron acceptor for the enzyme in this species is believed to be ubiquinone. Couples the redox reaction to proton translocation (for every two electrons transferred, four hydrogen ions are translocated across the cytoplasmic membrane), and thus conserves the redox energy in a proton gradient. This is NADH-quinone oxidoreductase subunit C from Caulobacter sp. (strain K31).